We begin with the raw amino-acid sequence, 293 residues long: MQRVVFPNKILPYLLVAPQIVLTIVFFFWPASQALYQSVIREDPFGLKSGFVGFANFSAVLSEANYLNSLKVTVIFSVLTALLAMGVALLLATAADRVVRGKTFYRTLLIWPYAVAPAVAGMLWLFMFNPAMGTFAYMLRRNGFHWDPLLNGNHAMILIVVAAAWKQISYNFLFFVAGLQAIPKSLIEAAAIDGARGTRRFWTIIFPLLAPTTFFLLVVNTVYAFFDTFGIIHSVTGGGPARATETLVYKVYNDGFVNLNLGSSAAQSVILMAIVIGLTAFQFRFVEKRVHYG.

6 helical membrane passes run 10–30 (ILPYLLVAPQIVLTIVFFFWP), 72–92 (VTVIFSVLTALLAMGVALLLA), 108–128 (LLIWPYAVAPAVAGMLWLFMF), 156–176 (MILIVVAAAWKQISYNFLFFV), 204–224 (IIFPLLAPTTFFLLVVNTVYA), and 261–281 (LGSSAAQSVILMAIVIGLTAF). Residues 66-282 (YLNSLKVTVI…AIVIGLTAFQ (217 aa)) form the ABC transmembrane type-1 domain.

It belongs to the binding-protein-dependent transport system permease family. In terms of assembly, the complex is composed of two ATP-binding proteins (UgpC), two transmembrane proteins (UgpA and UgpE) and a solute-binding protein (UgpB).

It localises to the cell inner membrane. Part of the ABC transporter complex UgpBAEC involved in sn-glycerol-3-phosphate (G3P) import. Probably responsible for the translocation of the substrate across the membrane. The polypeptide is sn-glycerol-3-phosphate transport system permease protein UgpA (ugpA) (Rhizobium meliloti (strain 1021) (Ensifer meliloti)).